The primary structure comprises 117 residues: UPF0321 protein PJ695.01c (117 aa).

The N-terminal stretch at 1–17 is a signal peptide; sequence MLLLLYICCLFLKFILA. Residues Asn-39, Asn-65, Asn-71, and Asn-104 are each glycosylated (N-linked (GlcNAc...) asparagine).

This sequence belongs to the UPF0321 family.

This chain is UPF0321 protein PJ695.01c, found in Schizosaccharomyces pombe (strain 972 / ATCC 24843) (Fission yeast).